Reading from the N-terminus, the 572-residue chain is Probable terpene synthase 11 (572 aa).

Mg(2+) is bound by residues Asp317, Asp321, and Glu469. A DDXXD motif motif is present at residues 317–321 (DDIFD).

Belongs to the terpene synthase family. Mg(2+) is required as a cofactor.

Its function is as follows. Probable sesquiterpene synthase. The protein is Probable terpene synthase 11 (TPS11) of Ricinus communis (Castor bean).